A 684-amino-acid polypeptide reads, in one-letter code: Threonine--tRNA ligase (684 aa).

One can recognise a TGS domain in the interval 1 to 64; the sequence is MTAPNPSSLV…ESDTEVEPVA (64 aa). Residues 261-567 are catalytic; the sequence is DHRKLGVELD…LTEHYAGAFP (307 aa). C366, H417, and H544 together coordinate Zn(2+).

The protein belongs to the class-II aminoacyl-tRNA synthetase family. In terms of assembly, homodimer. It depends on Zn(2+) as a cofactor.

It localises to the cytoplasm. It catalyses the reaction tRNA(Thr) + L-threonine + ATP = L-threonyl-tRNA(Thr) + AMP + diphosphate + H(+). Catalyzes the attachment of threonine to tRNA(Thr) in a two-step reaction: L-threonine is first activated by ATP to form Thr-AMP and then transferred to the acceptor end of tRNA(Thr). Also edits incorrectly charged L-seryl-tRNA(Thr). This chain is Threonine--tRNA ligase, found in Mycobacteroides abscessus (strain ATCC 19977 / DSM 44196 / CCUG 20993 / CIP 104536 / JCM 13569 / NCTC 13031 / TMC 1543 / L948) (Mycobacterium abscessus).